Reading from the N-terminus, the 734-residue chain is Photosystem I P700 chlorophyll a apoprotein A2 (734 aa).

8 consecutive transmembrane segments (helical) span residues 46-69, 135-158, 175-199, 273-291, 330-353, 369-395, 417-439, and 517-535; these read IFAS…FHVA, LYQG…LHLQ, LNHH…HVAI, IAHH…GHQY, LHFQ…QHMY, AALY…IFFI, AIIS…LYVH, and FLVH…LILV. 2 residues coordinate [4Fe-4S] cluster: C559 and C568. A run of 2 helical transmembrane segments spans residues 575–596 and 643–665; these read AFYL…YWHW and LSVW…MFLI. 3 residues coordinate chlorophyll a: H654, M662, and Y670. W671 is a phylloquinone binding site. A helical membrane pass occupies residues 707-727; that stretch reads LVGLAHFSVGYIFTYAAFLIA.

It belongs to the PsaA/PsaB family. In terms of assembly, the PsaA/B heterodimer binds the P700 chlorophyll special pair and subsequent electron acceptors. PSI consists of a core antenna complex that captures photons, and an electron transfer chain that converts photonic excitation into a charge separation. The eukaryotic PSI reaction center is composed of at least 11 subunits. It depends on P700 is a chlorophyll a/chlorophyll a' dimer, A0 is one or more chlorophyll a, A1 is one or both phylloquinones and FX is a shared 4Fe-4S iron-sulfur center. as a cofactor.

Its subcellular location is the plastid. It localises to the chloroplast thylakoid membrane. It carries out the reaction reduced [plastocyanin] + hnu + oxidized [2Fe-2S]-[ferredoxin] = oxidized [plastocyanin] + reduced [2Fe-2S]-[ferredoxin]. Its function is as follows. PsaA and PsaB bind P700, the primary electron donor of photosystem I (PSI), as well as the electron acceptors A0, A1 and FX. PSI is a plastocyanin-ferredoxin oxidoreductase, converting photonic excitation into a charge separation, which transfers an electron from the donor P700 chlorophyll pair to the spectroscopically characterized acceptors A0, A1, FX, FA and FB in turn. Oxidized P700 is reduced on the lumenal side of the thylakoid membrane by plastocyanin. The chain is Photosystem I P700 chlorophyll a apoprotein A2 from Chaetosphaeridium globosum (Charophycean green alga).